Reading from the N-terminus, the 95-residue chain is Opiscorpine-1 (95 aa).

A signal peptide spans 1–19 (MNNKLTALIFLGLLAIASC). Positions 55 to 95 (EFMCVANVDMTKSCDTHCQKASGEKGYCHGTKCKCGVPLSY) constitute a BetaSPN-type CS-alpha/beta domain. Intrachain disulfides connect cysteine 58-cysteine 82, cysteine 68-cysteine 87, and cysteine 72-cysteine 89.

The protein belongs to the long chain scorpion toxin family. Class 3 subfamily. Expressed by the venom gland.

The protein resides in the secreted. The short synthetic peptide (20-54) has antimicrobial activity against the yeasts F.culmorum (IC(50)=8.8 uM) and F.oxysporum (IC(50)=10 uM), and the Gram-negative bacteria E.coli. In Opistophthalmus carinatus (African yellow leg scorpion), this protein is Opiscorpine-1.